The primary structure comprises 611 residues: Chaperone protein DnaK (611 aa).

Threonine 172 bears the Phosphothreonine; by autocatalysis mark. A disordered region spans residues 575-611 (AAQAAQAQQDGGNESADKQDDNVVDADYEEVNDDDKK). A compositionally biased stretch (acidic residues) spans 596 to 611 (NVVDADYEEVNDDDKK).

Belongs to the heat shock protein 70 family.

In terms of biological role, acts as a chaperone. The chain is Chaperone protein DnaK from Shouchella clausii (strain KSM-K16) (Alkalihalobacillus clausii).